The chain runs to 333 residues: Dehydrodolichyl diphosphate synthase complex subunit Dhdds (333 aa).

Residues Asp34, Gly35, Arg37, Arg38, and Arg85 each contribute to the (2E,6E)-farnesyl diphosphate site. Mg(2+) is bound at residue Asp34. Isopentenyl diphosphate is bound by residues Arg38, Arg85, Arg205, Arg211, and Ser213.

The protein belongs to the UPP synthase family. In terms of assembly, the active dehydrodolichyl diphosphate synthase complex is a heterotetramer composed of a dimer of heterodimer of DHDDS and NUS1. Interacts with NPC2. Mg(2+) serves as cofactor.

It localises to the endoplasmic reticulum membrane. The catalysed reaction is n isopentenyl diphosphate + (2E,6E)-farnesyl diphosphate = a di-trans,poly-cis-polyprenyl diphosphate + n diphosphate. Its pathway is protein modification; protein glycosylation. The protein operates within lipid metabolism. Its function is as follows. With NUS1, forms the dehydrodolichyl diphosphate synthase (DDS) complex, an essential component of the dolichol monophosphate (Dol-P) biosynthetic machinery. Both subunits contribute to enzymatic activity, i.e. condensation of multiple copies of isopentenyl pyrophosphate (IPP) to farnesyl pyrophosphate (FPP) to produce dehydrodolichyl diphosphate (Dedol-PP), a precursor of dolichol phosphate which is utilized as a sugar carrier in protein glycosylation in the endoplasmic reticulum (ER). Synthesizes long-chain polyprenols, mostly of C95 and C100 chain length. Regulates the glycosylation and stability of nascent NPC2, thereby promoting trafficking of LDL-derived cholesterol. The chain is Dehydrodolichyl diphosphate synthase complex subunit Dhdds from Mus musculus (Mouse).